Reading from the N-terminus, the 590-residue chain is Acetolactate synthase large subunit (590 aa).

Glu61 contacts thiamine diphosphate. Residues Arg163, 271 to 292 (HGTA…LGAR), and 314 to 333 (DIDP…IVGD) each bind FAD. The tract at residues 405 to 484 (QHQMWSAQFL…VKIIIINNRW (80 aa)) is thiamine pyrophosphate binding. 2 residues coordinate Mg(2+): Asp455 and Asn482.

It belongs to the TPP enzyme family. In terms of assembly, dimer of large and small chains. It depends on Mg(2+) as a cofactor. The cofactor is thiamine diphosphate.

The protein localises to the plastid. It is found in the chloroplast. The enzyme catalyses 2 pyruvate + H(+) = (2S)-2-acetolactate + CO2. It participates in amino-acid biosynthesis; L-isoleucine biosynthesis; L-isoleucine from 2-oxobutanoate: step 1/4. Its pathway is amino-acid biosynthesis; L-valine biosynthesis; L-valine from pyruvate: step 1/4. This is Acetolactate synthase large subunit (ilvB) from Pyropia yezoensis (Susabi-nori).